We begin with the raw amino-acid sequence, 129 residues long: Protein UL131A (129 aa).

An N-terminal signal peptide occupies residues 1–18; it reads MRLCRVWLSVCLCAVVLG.

Forms the envelope pentamer complex (PC) composed of gH, gL, UL128, UL130, and UL131A. The pentamer interacts with host NRP2. The interaction with gH is important for the formation of UL128, UL130, gH-gL complex.

The protein resides in the virion membrane. In terms of biological role, plays a role in viral entry into host cells. Forms a pentameric complex at the surface of the viral envelope together with gH, gL, UL130 and UL131. This complex is required for entry in epithelial, endothelial and myeloid host cells. Mechanistically, engages host receptor(s) including neurophilin 2/NRP2 to mediate infection. Contributes to the formation of the complex between UL128, UL130 and gH-gL. The sequence is that of Protein UL131A (UL131A) from Human cytomegalovirus (strain Merlin) (HHV-5).